The chain runs to 521 residues: MLQRSLGVNGRKLAMSARSAKRERKNASTAASKCYVVPPSARGWVHAYSVTATSMLNRRKAILDYLQGAVWVLPTFGVAIGLGSGAVLSMIPVKSGTLIDKLMFQGTPGDARGVLIVVSATMITTIGIVFSLTVLSLQIASSQFSVRLLRTFLRDVPNQVVLAIFACTFAYSTGGLHTVGEHRDGGAFIPKVAVTGSLALAFVSIAALIYFLHHLMHSIQIDTIMDKVRLRTLGLVDQLYPESDTADRQVETPPSPPADAVPLLAPHSGYLQTVDVDDIAEFAAASRYTALLVTFVGDYVTAGGLLGWCWRRGTAPGAPGSDFPQRCLRHVHIGFERTLQQDIRFGLRQMVDIALRALSPALNDPYTAIQVVHHLSAVESVLASRALPDDVRRDRAGELLFWLPYPSFATYLHVGCAQIRRYGSREPLVLTALLQLLSAVAQNCVDPSRRVAVQTQIALVVRAAQREFADESDRAMVLGAAARATEVVERPGTLAPPPSTFGQVAAAQAAASTIRSADRDG.

The tract at residues 1–25 (MLQRSLGVNGRKLAMSARSAKRERK) is disordered. 6 helical membrane-spanning segments follow: residues 68-88 (GAVWVLPTFGVAIGLGSGAVL), 114-134 (VLIVVSATMITTIGIVFSLTV), 160-180 (VVLAIFACTFAYSTGGLHTVG), 192-212 (VAVTGSLALAFVSIAALIYFL), 290-310 (ALLVTFVGDYVTAGGLLGWCW), and 399-419 (LLFWLPYPSFATYLHVGCAQI).

It localises to the cell membrane. This is an uncharacterized protein from Mycobacterium tuberculosis (strain CDC 1551 / Oshkosh).